Here is a 592-residue protein sequence, read N- to C-terminus: Protein phosphatase EYA1 (592 aa).

2 disordered regions span residues 1–95 (MEMQ…RPYP) and 240–320 (MTSS…PDSD). The span at 8 to 26 (SPHSRLSGSSESPSGPKLG) shows a compositional bias: low complexity. The segment covering 28–63 (SHINSNSMTPNGTEVKTEPMSSSETASTTADGSLNN) has biased composition (polar residues). Composition is skewed to low complexity over residues 64–75 (FSGSAIGSSSFS) and 241–253 (TSSN…PSTN). Over residues 254-287 (ATYQLQEPPSGITSQAVTDPTAEYSTIHSPSTPI) the composition is skewed to polar residues. Over residues 288-303 (KDSDSDRLRRGSDGKS) the composition is skewed to basic and acidic residues. The active-site Nucleophile is the Asp328. Positions 328, 330, and 556 each coordinate Mg(2+). The active-site Proton donor is the Asp330.

It belongs to the HAD-like hydrolase superfamily. EYA family. Probably interacts with SIX2, SIX4 and SIX5. Interacts with H2AX in response to DNA damage. Interacts with SIX3; promotes EYA1 translocation to the nucleus. The cofactor is Mg(2+). In terms of processing, sumoylated with SUMO1. As to expression, in the embryo, highly expressed in kidney with lower levels in brain. Weakly expressed in lung. In the adult, highly expressed in heart and skeletal muscle. Weakly expressed in brain and liver. No expression in eye or kidney.

It is found in the cytoplasm. It localises to the nucleus. It catalyses the reaction O-phospho-L-tyrosyl-[protein] + H2O = L-tyrosyl-[protein] + phosphate. The catalysed reaction is O-phospho-L-seryl-[protein] + H2O = L-seryl-[protein] + phosphate. The enzyme catalyses O-phospho-L-threonyl-[protein] + H2O = L-threonyl-[protein] + phosphate. Functions both as protein phosphatase and as transcriptional coactivator for SIX1, and probably also for SIX2, SIX4 and SIX5. Tyrosine phosphatase that dephosphorylates 'Tyr-142' of histone H2AX (H2AXY142ph) and promotes efficient DNA repair via the recruitment of DNA repair complexes containing MDC1. 'Tyr-142' phosphorylation of histone H2AX plays a central role in DNA repair and acts as a mark that distinguishes between apoptotic and repair responses to genotoxic stress. Its function as histone phosphatase may contribute to its function in transcription regulation during organogenesis. Also has phosphatase activity with proteins phosphorylated on Ser and Thr residues (in vitro). Required for normal embryonic development of the craniofacial and trunk skeleton, kidneys and ears. Together with SIX1, it plays an important role in hypaxial muscle development; in this it is functionally redundant with EYA2. The polypeptide is Protein phosphatase EYA1 (EYA1) (Homo sapiens (Human)).